The primary structure comprises 164 residues: Phosphopantetheine adenylyltransferase (164 aa).

Ser10 contacts substrate. ATP is bound by residues 10–11 (SF) and His18. The substrate site is built by Lys42, Met74, and Arg88. ATP contacts are provided by residues 89 to 91 (GLR), Glu99, and 124 to 130 (YFFVSAR).

The protein belongs to the bacterial CoaD family. As to quaternary structure, homohexamer. Mg(2+) is required as a cofactor.

It is found in the cytoplasm. It catalyses the reaction (R)-4'-phosphopantetheine + ATP + H(+) = 3'-dephospho-CoA + diphosphate. It participates in cofactor biosynthesis; coenzyme A biosynthesis; CoA from (R)-pantothenate: step 4/5. Its function is as follows. Reversibly transfers an adenylyl group from ATP to 4'-phosphopantetheine, yielding dephospho-CoA (dPCoA) and pyrophosphate. The protein is Phosphopantetheine adenylyltransferase of Anaeromyxobacter dehalogenans (strain 2CP-1 / ATCC BAA-258).